An 85-amino-acid polypeptide reads, in one-letter code: Small ribosomal subunit protein bS20 (85 aa).

It belongs to the bacterial ribosomal protein bS20 family.

Binds directly to 16S ribosomal RNA. The polypeptide is Small ribosomal subunit protein bS20 (Ruminiclostridium cellulolyticum (strain ATCC 35319 / DSM 5812 / JCM 6584 / H10) (Clostridium cellulolyticum)).